A 930-amino-acid chain; its full sequence is Translation initiation factor IF-2 (930 aa).

Over residues 50–67 (FKPAAAPKVEAKPAAPKV) the composition is skewed to low complexity. 2 disordered regions span residues 50–195 (FKPA…PRID) and 260–346 (EVVP…HELP). Basic and acidic residues-rich tracts occupy residues 68–90 (SAEK…EAKP) and 110–125 (FKAE…AERR). Low complexity predominate over residues 129–141 (KGNNRDQQQNGNR). Basic and acidic residues-rich tracts occupy residues 157–167 (RDNRRFNDQAK) and 262–295 (VPEK…DGPR). Residues 309-318 (NQKNSNWNNN) are compositionally biased toward low complexity. The segment covering 337-346 (VTERKFHELP) has biased composition (basic and acidic residues). The tr-type G domain maps to 432–599 (ERPPVVTIMG…TVLLVAEIQE (168 aa)). Residues 441–448 (GHVDHGKT) are G1. Position 441 to 448 (441 to 448 (GHVDHGKT)) interacts with GTP. The segment at 466–470 (GITQH) is G2. The tract at residues 487–490 (DTPG) is G3. GTP-binding positions include 487 to 491 (DTPGH) and 541 to 544 (NKID). Residues 541 to 544 (NKID) are G4. Residues 577–579 (SAK) form a G5 region.

Belongs to the TRAFAC class translation factor GTPase superfamily. Classic translation factor GTPase family. IF-2 subfamily.

Its subcellular location is the cytoplasm. In terms of biological role, one of the essential components for the initiation of protein synthesis. Protects formylmethionyl-tRNA from spontaneous hydrolysis and promotes its binding to the 30S ribosomal subunits. Also involved in the hydrolysis of GTP during the formation of the 70S ribosomal complex. The protein is Translation initiation factor IF-2 of Streptococcus pneumoniae (strain Hungary19A-6).